Consider the following 295-residue polypeptide: Signal-transducing adaptor protein 1 (295 aa).

Residues 25–121 enclose the PH domain; it reads PLYFEGFLLI…WRGFILTVTE (97 aa). Y168 is subject to Phosphotyrosine. The 104-residue stretch at 177 to 280 folds into the SH2 domain; the sequence is ACFYTVSRKE…TDENTGQEPS (104 aa). A disordered region spans residues 270 to 295; sequence STDENTGQEPSMEGRSEKLKKNPHIA.

In terms of assembly, interacts with KIT and CSF1R. Interacts with URI1; the interaction is phosphorylation-dependent and occurs in a growth-dependent manner. Post-translationally, phosphorylated on tyrosine by TEC. Phosphorylated on tyrosine by KIT.

Its subcellular location is the nucleus. It is found in the cytoplasm. The protein resides in the mitochondrion. Functionally, in BCR signaling, appears to function as a docking protein acting downstream of TEC and participates in a positive feedback loop by increasing the activity of TEC. This is Signal-transducing adaptor protein 1 (STAP1) from Homo sapiens (Human).